We begin with the raw amino-acid sequence, 520 residues long: BBSome complex member BBS4 (520 aa).

Residues 1–26 (MAEVKLGMKTQVPASVESQKPRSKKA) are disordered. Residues 1–66 (MAEVKLGMKT…EQLQETQGLC (66 aa)) form a required for localization to centrosomes region. TPR repeat units follow at residues 67-100 (EYAIYVQALIFRLEGNIQESLELFQTCAVLSPQC), 102-134 (DNLKQVARSLFLLGKHKAATEVYNEAAKLNQKD), 135-167 (WEICHNLGVCYTYLKQFNKAQDQLHSALQLNKH), 168-201 (DLTYIMLGKIHLLQGDLDKAIEIYKKAVEFSPEN), 203-235 (ELLTTLGLLYLQLGVYQKAFEHLGNALTYDPAN), 237-269 (KAILAAGSMMQTHGDFDVALTKYRVVACAIPES), 270-303 (PPLWNNIGMCFFGKKKYVAAISCLKRANYLAPFD), 304-337 (WKILYNLGLVHLTMQQYASAFHFLSAAINFQPKM), 339-371 (ELYMLLAVALTNLEDIENARRAYVEAVRLDKCN), and 373-408 (LVNLNYAVLLYNQGEKKSALAQYQEMEKKVNFLKDN). Positions 101-337 (ADNLKQVARS…SAAINFQPKM (237 aa)) are interaction with PCM1. A required for localization to centrosomes region spans residues 338–520 (GELYMLLAVA…TEASEQKKEK (183 aa)). The segment at 488-520 (AQLPKPPSLPLEPEPEPTVEASPTEASEQKKEK) is disordered.

The protein belongs to the BBS4 family. As to quaternary structure, part of BBSome complex, that contains BBS1, BBS2, BBS4, BBS5, BBS7, BBS8/TTC8, BBS9 and BBIP10. Interacts with PCM1 and DCTN1. Interacts with DC28B. Interacts with ALDOB and C2CD3. Interacts with PKD1. Interacts with CEP290. Interacts with DLEC1. Expressed in the hippocampus and dentate gyrus, the columnar epithelial cells of bronchioles, the olfactory epithelium and the inner segment and outer nuclear layer of the retina. Expressed in testis.

Its subcellular location is the cytoplasm. It localises to the cytoskeleton. The protein resides in the microtubule organizing center. The protein localises to the centrosome. It is found in the cell projection. Its subcellular location is the cilium membrane. It localises to the centriolar satellite. The protein resides in the cilium. The protein localises to the flagellum. Functionally, the BBSome complex is thought to function as a coat complex required for sorting of specific membrane proteins to the primary cilia. The BBSome complex is required for ciliogenesis but is dispensable for centriolar satellite function. This ciliogenic function is mediated in part by the Rab8 GDP/GTP exchange factor, which localizes to the basal body and contacts the BBSome. Rab8(GTP) enters the primary cilium and promotes extension of the ciliary membrane. Firstly the BBSome associates with the ciliary membrane and binds to RAB3IP/Rabin8, the guanosyl exchange factor (GEF) for Rab8 and then the Rab8-GTP localizes to the cilium and promotes docking and fusion of carrier vesicles to the base of the ciliary membrane. The BBSome complex, together with the LTZL1, controls SMO ciliary trafficking and contributes to the sonic hedgehog (SHH) pathway regulation. Required for proper BBSome complex assembly and its ciliary localization. Required for microtubule anchoring at the centrosome but not for microtubule nucleation. May be required for the dynein-mediated transport of pericentriolar proteins to the centrosome. This is BBSome complex member BBS4 (Bbs4) from Mus musculus (Mouse).